A 346-amino-acid chain; its full sequence is High mobility group protein 20A (346 aa).

Polar residues-rich tracts occupy residues 1–10 and 55–65; these read MESLMASSTL and SQGQLLQSEAS. 2 disordered regions span residues 1–112 and 178–210; these read MESL…YVRF and FSRK…TEVK. Positions 71–81 are enriched in basic and acidic residues; sequence NEQRPEDEQRS. The segment covering 82-95 has biased composition (basic residues); sequence KRGGWSKGRKRKKP. Positions 102-170 form a DNA-binding region, HMG box; that stretch reads PKSPLTGYVR…RYMKELEQYQ (69 aa). A Phosphoserine modification is found at S104. The span at 181 to 210 shows a compositional bias: basic and acidic residues; that stretch reads KTQDRQKGKSHRQDAARQATHDHEKETEVK. Residues 228 to 272 adopt a coiled-coil conformation; sequence SKAREAELRQLRKSNMEFEERNAALQKHVESMRTAVEKLEVDVIQ.

Interacts with DTNB. Expressed in brain. Detected in mature neurons.

The protein resides in the nucleus. Plays a role in neuronal differentiation as chromatin-associated protein. Acts as inhibitor of HMG20B. Overcomes the repressive effects of the neuronal silencer REST and induces the activation of neuronal-specific genes. Involved in the recruitment of the histone methyltransferase KMT2A/MLL1 and consequent increased methylation of histone H3 lysine 4. In Mus musculus (Mouse), this protein is High mobility group protein 20A (Hmg20a).